The sequence spans 150 residues: Copper transporter 3 (150 aa).

2 helical membrane-spanning segments follow: residues 50–70 (GGMY…LEFL) and 100–120 (LAYL…LAAV).

It belongs to the copper transporter (Ctr) (TC 1.A.56) family. SLC31A subfamily.

The protein localises to the membrane. Its function is as follows. Involved in the transport of copper. The sequence is that of Copper transporter 3 (COPT3) from Oryza sativa subsp. japonica (Rice).